Consider the following 138-residue polypeptide: Small ribosomal subunit protein bS6 (138 aa).

Residues 94 to 138 form a disordered region; sequence VKQDGPLPTPKPTSKEDETEKEEVKPTEDKTESPAQEEKKEDSKE. The span at 106-138 shows a compositional bias: basic and acidic residues; that stretch reads TSKEDETEKEEVKPTEDKTESPAQEEKKEDSKE.

The protein belongs to the bacterial ribosomal protein bS6 family.

Binds together with bS18 to 16S ribosomal RNA. This Prochlorococcus marinus (strain NATL1A) protein is Small ribosomal subunit protein bS6.